The sequence spans 549 residues: tRNA pseudouridine synthase 1 (549 aa).

The segment covering 1-13 has biased composition (low complexity); the sequence is MEEVAPEQVQEVQ. Positions 1-83 are disordered; the sequence is MEEVAPEQVQ…NGNPIPREPR (83 aa). Positions 53–73 are enriched in basic and acidic residues; the sequence is PAEKKQKTDQRQIIREPKLDD. Catalysis depends on D146, which acts as the Nucleophile. The disordered stretch occupies residues 507 to 549; it reads PGIDYGKNEKEDSNKESSNDQVNKESAPATSKPAEAVEQTEKN. A compositionally biased stretch (basic and acidic residues) spans 512-524; it reads GKNEKEDSNKESS.

This sequence belongs to the tRNA pseudouridine synthase TruA family. Zn(2+) serves as cofactor.

The protein localises to the nucleus. The catalysed reaction is a uridine in tRNA = a pseudouridine in tRNA. It carries out the reaction uridine in snRNA = pseudouridine in snRNA. The enzyme catalyses a uridine in mRNA = a pseudouridine in mRNA. Functionally, formation of pseudouridine at positions 27 and 28 in the anticodon stem and loop of transfer RNAs; at positions 34 and 36 of intron-containing precursor tRNA(Ile) and at position 35 in the intron-containing tRNA(Tyr). Catalyzes pseudouridylation at position 44 in U2 snRNA. Also catalyzes pseudouridylation of mRNAs. This is tRNA pseudouridine synthase 1 (PUS1) from Candida glabrata (strain ATCC 2001 / BCRC 20586 / JCM 3761 / NBRC 0622 / NRRL Y-65 / CBS 138) (Yeast).